Consider the following 129-residue polypeptide: MNNLLLHFFCVAVGGAIGASARFAMVLAMQSFGVRAFPFATLTVNIIGSFFLGLLLAYAEQQPVSETTRLFLGVGLLGAFTTFSTFSVEVVALASQGELLKAALHIAFNVIICIAAVFAAMMLYSTTVK.

Helical transmembrane passes span 8 to 28 (FFCVAVGGAIGASARFAMVLA), 36 to 56 (AFPFATLTVNIIGSFFLGLLL), 71 to 91 (FLGVGLLGAFTTFSTFSVEVV), and 103 to 123 (ALHIAFNVIICIAAVFAAMML). Na(+) is bound by residues Gly78 and Thr81.

This sequence belongs to the fluoride channel Fluc/FEX (TC 1.A.43) family.

It is found in the cell inner membrane. The enzyme catalyses fluoride(in) = fluoride(out). Its activity is regulated as follows. Na(+) is not transported, but it plays an essential structural role and its presence is essential for fluoride channel function. Functionally, fluoride-specific ion channel. Important for reducing fluoride concentration in the cell, thus reducing its toxicity. This is Fluoride-specific ion channel FluC from Idiomarina loihiensis (strain ATCC BAA-735 / DSM 15497 / L2-TR).